Reading from the N-terminus, the 87-residue chain is Small ribosomal subunit protein bS20 (87 aa).

It belongs to the bacterial ribosomal protein bS20 family.

Functionally, binds directly to 16S ribosomal RNA. The protein is Small ribosomal subunit protein bS20 of Sphingopyxis alaskensis (strain DSM 13593 / LMG 18877 / RB2256) (Sphingomonas alaskensis).